The sequence spans 241 residues: Small ribosomal subunit protein uS2 (241 aa).

This sequence belongs to the universal ribosomal protein uS2 family.

The chain is Small ribosomal subunit protein uS2 from Pectobacterium atrosepticum (strain SCRI 1043 / ATCC BAA-672) (Erwinia carotovora subsp. atroseptica).